The sequence spans 415 residues: Imidazolonepropionase (415 aa).

Fe(3+)-binding residues include His74 and His76. His74 and His76 together coordinate Zn(2+). 3 residues coordinate 4-imidazolone-5-propanoate: Arg83, Tyr146, and His179. N-formimidoyl-L-glutamate is bound at residue Tyr146. His244 contributes to the Fe(3+) binding site. Residue His244 participates in Zn(2+) binding. 4-imidazolone-5-propanoate is bound at residue Gln247. Asp319 serves as a coordination point for Fe(3+). Position 319 (Asp319) interacts with Zn(2+). Residues Asn321 and Gly323 each contribute to the N-formimidoyl-L-glutamate site. Thr324 lines the 4-imidazolone-5-propanoate pocket.

The protein belongs to the metallo-dependent hydrolases superfamily. HutI family. It depends on Zn(2+) as a cofactor. Fe(3+) is required as a cofactor.

The protein resides in the cytoplasm. The enzyme catalyses 4-imidazolone-5-propanoate + H2O = N-formimidoyl-L-glutamate. It participates in amino-acid degradation; L-histidine degradation into L-glutamate; N-formimidoyl-L-glutamate from L-histidine: step 3/3. Functionally, catalyzes the hydrolytic cleavage of the carbon-nitrogen bond in imidazolone-5-propanoate to yield N-formimidoyl-L-glutamate. It is the third step in the universal histidine degradation pathway. The protein is Imidazolonepropionase of Cupriavidus metallidurans (strain ATCC 43123 / DSM 2839 / NBRC 102507 / CH34) (Ralstonia metallidurans).